We begin with the raw amino-acid sequence, 154 residues long: Insulin-like growth factor 1 (154 aa).

Residues 50–78 are b; that stretch reads GPETLCGAELVDALQFVCGDRGFYFNKPT. Intrachain disulfides connect cysteine 55–cysteine 97, cysteine 67–cysteine 110, and cysteine 96–cysteine 101. The tract at residues 79–90 is c; sequence GYGSSSRRAPQT. The a stretch occupies residues 91–111; that stretch reads GIVDECCFRSCDLRRLEMYCA. Residues 112 to 119 are d; sequence PLKAAKSA. A propeptide spans 120 to 154 (e peptide); that stretch reads RSVRAQRHTDMPKAQKEVHLKNTSRGSAGNKNYRM. The disordered stretch occupies residues 121-154; sequence SVRAQRHTDMPKAQKEVHLKNTSRGSAGNKNYRM. Basic and acidic residues predominate over residues 126–139; sequence RHTDMPKAQKEVHL. Residues 140 to 154 show a composition bias toward polar residues; it reads KNTSRGSAGNKNYRM.

Belongs to the insulin family. Forms a ternary complex with IGFR1 and ITGAV:ITGB3. Forms a ternary complex with IGFR1 and ITGA6:ITGB4. Forms a ternary complex with IGFBP3 and ALS.

It localises to the secreted. Its function is as follows. The insulin-like growth factors, isolated from plasma, are structurally and functionally related to insulin but have a much higher growth-promoting activity. May be a physiological regulator of [1-14C]-2-deoxy-D-glucose (2DG) transport and glycogen synthesis in osteoblasts. Stimulates glucose transport in bone-derived osteoblastic (PyMS) cells and is effective at much lower concentrations than insulin, not only regarding glycogen and DNA synthesis but also with regard to enhancing glucose uptake. May play a role in synapse maturation. Ca(2+)-dependent exocytosis of IGF1 is required for sensory perception of smell in the olfactory bulb. Acts as a ligand for IGF1R. Binds to the alpha subunit of IGF1R, leading to the activation of the intrinsic tyrosine kinase activity which autophosphorylates tyrosine residues in the beta subunit thus initiating a cascade of down-stream signaling events leading to activation of the PI3K-AKT/PKB and the Ras-MAPK pathways. Binds to integrins ITGAV:ITGB3 and ITGA6:ITGB4. Its binding to integrins and subsequent ternary complex formation with integrins and IGFR1 are essential for IGF1 signaling. Induces the phosphorylation and activation of IGFR1, MAPK3/ERK1, MAPK1/ERK2 and AKT1. As part of the MAPK/ERK signaling pathway, acts as a negative regulator of apoptosis in cardiomyocytes via promotion of STUB1/CHIP-mediated ubiquitination and degradation of ICER-type isoforms of CREM. The protein is Insulin-like growth factor 1 of Ovis aries (Sheep).